The primary structure comprises 307 residues: Small ribosomal subunit biogenesis GTPase RsgA (307 aa).

The tract at residues 1 to 20 (MPSEHPFSDGISTPNPKETM) is disordered. Residues 10-20 (GISTPNPKETM) show a composition bias toward polar residues. Residues 85–242 (RQDAWKTKLI…LIDSPGLQEF (158 aa)) form the CP-type G domain. Residues 135-138 (NKAD) and 184-192 (GQSGMGKST) each bind GTP. 4 residues coordinate Zn(2+): C266, C271, H273, and C279.

It belongs to the TRAFAC class YlqF/YawG GTPase family. RsgA subfamily. As to quaternary structure, monomer. Associates with 30S ribosomal subunit, binds 16S rRNA. Zn(2+) serves as cofactor.

It is found in the cytoplasm. Functionally, one of several proteins that assist in the late maturation steps of the functional core of the 30S ribosomal subunit. Helps release RbfA from mature subunits. May play a role in the assembly of ribosomal proteins into the subunit. Circularly permuted GTPase that catalyzes slow GTP hydrolysis, GTPase activity is stimulated by the 30S ribosomal subunit. This chain is Small ribosomal subunit biogenesis GTPase RsgA, found in Neisseria meningitidis serogroup C / serotype 2a (strain ATCC 700532 / DSM 15464 / FAM18).